Consider the following 630-residue polypeptide: Long-chain-fatty-acid--AMP ligase FadD32 (630 aa).

Residues T187–R192, S342, A346, D469, and R483 contribute to the ATP site.

The protein belongs to the ATP-dependent AMP-binding enzyme family. In terms of assembly, monomer.

The enzyme catalyses a long-chain fatty acid + holo-[ACP] + ATP = a long-chain fatty acyl-[ACP] + AMP + diphosphate. It catalyses the reaction decanoate + ATP + H(+) = decanoyl-AMP + diphosphate. It carries out the reaction dodecanoate + ATP + H(+) = dodecanoyl-AMP + diphosphate. The catalysed reaction is tetradecanoate + ATP + H(+) = tetradecanoyl-AMP + diphosphate. It functions in the pathway lipid metabolism; mycolic acid biosynthesis. The acyl-AMP ligase activity is inhibited by the alkylphosphate ester of AMP, adenosine 50-dodecylphosphate (AMPC12). Also inhibited by eicosyl-AMP (AMPC20). In terms of biological role, involved in the biosynthesis of mycolic acids. Catalyzes the activation of long-chain fatty acids as acyl-adenylates (acyl-AMP), which are then transferred to the phosphopantetheine arm of the polyketide synthase Pks13 for further chain extension. Can use decanoate (C10), dodecanoate (C12) and tetradecanoate (C14). This is Long-chain-fatty-acid--AMP ligase FadD32 from Mycolicibacterium smegmatis (strain ATCC 700084 / mc(2)155) (Mycobacterium smegmatis).